We begin with the raw amino-acid sequence, 225 residues long: Large ribosomal subunit protein bL25 (225 aa).

Residues 197–225 (PQREEQMEDTDTAAADEEGDKEEDADKQE) form a disordered region. Acidic residues predominate over residues 202 to 225 (QMEDTDTAAADEEGDKEEDADKQE).

Belongs to the bacterial ribosomal protein bL25 family. CTC subfamily. As to quaternary structure, part of the 50S ribosomal subunit; part of the 5S rRNA/L5/L18/L25 subcomplex. Contacts the 5S rRNA. Binds to the 5S rRNA independently of L5 and L18.

Its function is as follows. This is one of the proteins that binds to the 5S RNA in the ribosome where it forms part of the central protuberance. This chain is Large ribosomal subunit protein bL25, found in Dichelobacter nodosus (strain VCS1703A).